The chain runs to 214 residues: Probable transaldolase (214 aa).

Lys-83 functions as the Schiff-base intermediate with substrate in the catalytic mechanism.

It belongs to the transaldolase family. Type 3B subfamily.

Its subcellular location is the cytoplasm. It carries out the reaction D-sedoheptulose 7-phosphate + D-glyceraldehyde 3-phosphate = D-erythrose 4-phosphate + beta-D-fructose 6-phosphate. It participates in carbohydrate degradation; pentose phosphate pathway; D-glyceraldehyde 3-phosphate and beta-D-fructose 6-phosphate from D-ribose 5-phosphate and D-xylulose 5-phosphate (non-oxidative stage): step 2/3. Functionally, transaldolase is important for the balance of metabolites in the pentose-phosphate pathway. The polypeptide is Probable transaldolase (Desulfatibacillum aliphaticivorans).